We begin with the raw amino-acid sequence, 470 residues long: Velvet complex subunit B (470 aa).

2 disordered regions span residues 1–148 (MNSS…EEGT) and 223–321 (VRSS…NPLF). Residues 15 to 37 (PGPGYSSSVPPPIHAYQQQQQHQ) show a composition bias toward low complexity. Residues 38 to 49 (HPPPSLLPPPPT) show a composition bias toward pro residues. Positions 74–86 (HQHHAPPPPHHHS) are enriched in basic residues. The segment covering 102 to 124 (NQYPRPHPLPPSRNDEPPPPSSE) has biased composition (pro residues). The Velvet domain maps to 147 to 452 (GTGLKYSLDV…ALQGIKIPIR (306 aa)). Low complexity predominate over residues 232-241 (GASSNNYSYS). Positions 242 to 255 (TLEPSTPSYQQQAL) are enriched in polar residues. The segment covering 280–301 (QQGYGQAPSYQSSSSYGPPQQY) has biased composition (low complexity). Residues 307–318 (GYNTDPPASSAN) show a composition bias toward polar residues.

This sequence belongs to the velvet family. VelB subfamily. As to quaternary structure, component of the heterotrimeric velvet complex composed of laeA, veA and velB; VeA acting as a bridging protein between laeA and velB. Forms a heterodimeric complex with vosA; the formation of the velB-vosA complex is light-dependent.

It localises to the nucleus. It is found in the cytoplasm. Component of the velvet transcription factor complex that controls sexual/asexual developmental ratio in response to light, promoting sexual development in the darkness while stimulating asexual sporulation under illumination. The velvet complex acts as a global regulator for secondary metabolite gene expression. Component of the velB-VosA heterodimeric complex that plays a dual role in activating genes associated with spore maturation and repressing certain development-associated genes. The complex binds DNA through the DNA-binding domain of vosA that recognizes an 11-nucleotide consensus sequence 5'-CTGGCCGCGGC-3' consisting of two motifs in the promoters of key developmental regulatory genes. Controls the expression of the pink pigment aurofusarin and the mycotoxin deoxynivalenol gene clusters. Regulates hyphae formation, hyphal hydrophobicity and conidiation. Regulates of cell wall integrity and pathogenicity. In Gibberella zeae (strain ATCC MYA-4620 / CBS 123657 / FGSC 9075 / NRRL 31084 / PH-1) (Wheat head blight fungus), this protein is Velvet complex subunit B.